We begin with the raw amino-acid sequence, 468 residues long: Probable citrate synthase, mitochondrial (468 aa).

Active-site residues include His-303, His-349, and Asp-404.

It belongs to the citrate synthase family. Homodimer.

Its subcellular location is the mitochondrion matrix. The enzyme catalyses oxaloacetate + acetyl-CoA + H2O = citrate + CoA + H(+). It functions in the pathway carbohydrate metabolism; tricarboxylic acid cycle; isocitrate from oxaloacetate: step 1/2. In Caenorhabditis elegans, this protein is Probable citrate synthase, mitochondrial (cts-1).